A 238-amino-acid polypeptide reads, in one-letter code: Large ribosomal subunit protein uL1 (238 aa).

This sequence belongs to the universal ribosomal protein uL1 family. Part of the 50S ribosomal subunit.

Binds directly to 23S rRNA. The L1 stalk is quite mobile in the ribosome, and is involved in E site tRNA release. In terms of biological role, protein L1 is also a translational repressor protein, it controls the translation of the L11 operon by binding to its mRNA. The sequence is that of Large ribosomal subunit protein uL1 from Trichodesmium erythraeum (strain IMS101).